The following is a 200-amino-acid chain: MTKLLVLYYSMYGHVETMAHAVAEGARSVEEVEVTLKRVPELMPEEIARNAGAKLAQEAPIATVDELPEYDAIIFGTPTRFGNMCAQMRNFLDQTGKHWMSGALIGKVGSVFTSTASQHGGQETTITSFHSTLLHQGMVIVGVPYSCQALLNMNEITGGSPYGASTLADADGSRQPSENELTIARFQGEHVAKFTKKVVE.

The Flavodoxin-like domain maps to 4 to 191; that stretch reads LLVLYYSMYG…TIARFQGEHV (188 aa). FMN contacts are provided by residues 10-15 and 79-81; these read SMYGHV and TRF. Tyrosine 12 contacts NAD(+). Tryptophan 99 serves as a coordination point for substrate. FMN-binding positions include 114-120 and histidine 135; that span reads STASQHG.

It belongs to the WrbA family. FMN is required as a cofactor.

The catalysed reaction is a quinone + NADH + H(+) = a quinol + NAD(+). The enzyme catalyses a quinone + NADPH + H(+) = a quinol + NADP(+). In Nitrosococcus oceani (strain ATCC 19707 / BCRC 17464 / JCM 30415 / NCIMB 11848 / C-107), this protein is NAD(P)H dehydrogenase (quinone).